The primary structure comprises 402 residues: Deoxyguanosinetriphosphate triphosphohydrolase-like protein 2 (402 aa).

An HD domain is found at 72–215 (RLTHSLEVAQ…MDLADEIAYA (144 aa)).

The protein belongs to the dGTPase family. Type 2 subfamily.

In Vibrio cholerae serotype O1 (strain ATCC 39315 / El Tor Inaba N16961), this protein is Deoxyguanosinetriphosphate triphosphohydrolase-like protein 2.